We begin with the raw amino-acid sequence, 253 residues long: 23S rRNA (cytidine-2'-O)-methyltransferase TlyA (253 aa).

In terms of domain architecture, S4 RNA-binding spans 1-73; the sequence is MRFDFFVSKR…LKLDLLSEIY (73 aa).

This sequence belongs to the TlyA family.

The enzyme catalyses cytidine(1920) in 23S rRNA + S-adenosyl-L-methionine = 2'-O-methylcytidine(1920) in 23S rRNA + S-adenosyl-L-homocysteine + H(+). Functionally, catalyzes the 2'-O-methylation at nucleotide C1920 in 23S rRNA. Enhances motility. Enhances biofilm formation. Involved in the assembly of 70S ribosomes. Involved in virulence by promoting adherence and invasion to host cells. Involved in pathogenicity by modulating secretion of host-protective chemokine interleukin 8 (IL-8). Involved in susceptibility to antibiotic capreomycin. This Campylobacter jejuni subsp. jejuni serotype O:23/36 (strain 81-176) protein is 23S rRNA (cytidine-2'-O)-methyltransferase TlyA.